Here is an 812-residue protein sequence, read N- to C-terminus: Probable inorganic carbon transporter subunit DabA (812 aa).

Cys-339, Asp-341, His-501, and Cys-516 together coordinate Zn(2+).

Belongs to the inorganic carbon transporter (TC 9.A.2) DabA family. In terms of assembly, forms a complex with DabB. Requires Zn(2+) as cofactor.

It localises to the cell inner membrane. Functionally, part of an energy-coupled inorganic carbon pump. The chain is Probable inorganic carbon transporter subunit DabA from Xanthomonas axonopodis pv. citri (strain 306).